We begin with the raw amino-acid sequence, 469 residues long: 3-isopropylmalate dehydratase large subunit (469 aa).

[4Fe-4S] cluster is bound by residues Cys-347, Cys-408, and Cys-411.

It belongs to the aconitase/IPM isomerase family. LeuC type 1 subfamily. Heterodimer of LeuC and LeuD. [4Fe-4S] cluster is required as a cofactor.

The enzyme catalyses (2R,3S)-3-isopropylmalate = (2S)-2-isopropylmalate. The protein operates within amino-acid biosynthesis; L-leucine biosynthesis; L-leucine from 3-methyl-2-oxobutanoate: step 2/4. Its function is as follows. Catalyzes the isomerization between 2-isopropylmalate and 3-isopropylmalate, via the formation of 2-isopropylmaleate. This Actinobacillus succinogenes (strain ATCC 55618 / DSM 22257 / CCUG 43843 / 130Z) protein is 3-isopropylmalate dehydratase large subunit.